A 317-amino-acid chain; its full sequence is Transaldolase (317 aa).

K131 serves as the catalytic Schiff-base intermediate with substrate.

This sequence belongs to the transaldolase family. Type 1 subfamily. In terms of assembly, homodimer.

The protein resides in the cytoplasm. The enzyme catalyses D-sedoheptulose 7-phosphate + D-glyceraldehyde 3-phosphate = D-erythrose 4-phosphate + beta-D-fructose 6-phosphate. The protein operates within carbohydrate degradation; pentose phosphate pathway; D-glyceraldehyde 3-phosphate and beta-D-fructose 6-phosphate from D-ribose 5-phosphate and D-xylulose 5-phosphate (non-oxidative stage): step 2/3. Functionally, transaldolase is important for the balance of metabolites in the pentose-phosphate pathway. The polypeptide is Transaldolase (Baumannia cicadellinicola subsp. Homalodisca coagulata).